A 362-amino-acid polypeptide reads, in one-letter code: Peptide chain release factor 1 (362 aa).

Gln-240 is subject to N5-methylglutamine.

This sequence belongs to the prokaryotic/mitochondrial release factor family. In terms of processing, methylated by PrmC. Methylation increases the termination efficiency of RF1.

It localises to the cytoplasm. Peptide chain release factor 1 directs the termination of translation in response to the peptide chain termination codons UAG and UAA. The polypeptide is Peptide chain release factor 1 (Bifidobacterium longum (strain NCC 2705)).